A 225-amino-acid chain; its full sequence is UPF0173 metal-dependent hydrolase Pcal_1074 (225 aa).

It belongs to the UPF0173 family.

This chain is UPF0173 metal-dependent hydrolase Pcal_1074, found in Pyrobaculum calidifontis (strain DSM 21063 / JCM 11548 / VA1).